Here is a 343-residue protein sequence, read N- to C-terminus: Signal peptide peptidase 1 (343 aa).

Topologically, residues 1-19 are lumenal; sequence MKTHERAANLALAGLSLAP. Residues 20 to 40 traverse the membrane as a helical segment; the sequence is LVVKVEPNVNVILTACLAVYV. Topologically, residues 41-62 are cytoplasmic; sequence GCYRSVKPTPPSETMSKEHAMR. A helical membrane pass occupies residues 63–83; sequence FPLVGSAMLLSLFLLFKFLSK. Topologically, residues 84-87 are lumenal; sequence DLVN. A helical transmembrane segment spans residues 88-108; it reads AVLTAYFFILGIAALCATLLP. Over 109 to 136 the chain is Cytoplasmic; that stretch reads SIKRFLPKEWNDNAIVWCAPFFHSLSVE. A helical transmembrane segment spans residues 137–157; the sequence is FTKSQVVASIPGFFFCIWYAA. Topologically, residues 158–160 are lumenal; the sequence is KKH. A helical transmembrane segment spans residues 161–181; it reads WLANNVLGISFCIQGIEMLSL. Residues 182–188 are Cytoplasmic-facing; it reads GSFKTGA. Residues 189–209 form a helical membrane-spanning segment; sequence ILLAGLFFYDIFWVFFTPVMV. Residue Asp-198 is part of the active site. At 210-230 the chain is on the lumenal side; the sequence is SVAKSFDAPIKLLFPTGDAAR. A helical transmembrane segment spans residues 231 to 251; the sequence is PFSMLGLGDIVIPGIFVALAL. Asp-239 is a catalytic residue. Residues 252–266 are Cytoplasmic-facing; it reads RFDVSRGIKNRYFNS. Residues 267–287 traverse the membrane as a helical segment; sequence AFLGYTVGLTVTIIVMNWFQA. The Lumenal portion of the chain corresponds to 288 to 290; sequence AQP. A PAL motif is present at residues 290-292; sequence PAL. Residues 291–311 traverse the membrane as a helical segment; the sequence is ALLYIVPGVIGFVAVHCLWNG. Residues 312-343 lie on the Cytoplasmic side of the membrane; it reads EVKPLLEYNESKAEEEDAVEEDTDSKQNKKEE. The tract at residues 322-343 is disordered; the sequence is SKAEEEDAVEEDTDSKQNKKEE. Residues 324–334 show a composition bias toward acidic residues; that stretch reads AEEEDAVEEDT. The Endoplasmic reticulum targeting signal motif lies at 340–343; sequence KKEE.

This sequence belongs to the peptidase A22B family. Ubiquitous.

Its subcellular location is the endoplasmic reticulum membrane. Its function is as follows. Intramembrane-cleaving aspartic protease (I-CLiP) that cleaves type II membrane signal peptides in the hydrophobic plane of the membrane. Catalyzes intramembrane proteolysis of some signal peptides after they have been cleaved from a preprotein, resulting in the release of the fragment from the ER membrane into the cytoplasm. The sequence is that of Signal peptide peptidase 1 (SPP1) from Oryza sativa subsp. japonica (Rice).